Consider the following 328-residue polypeptide: Malate dehydrogenase (328 aa).

NAD(+) is bound at residue 13–19; it reads GAAGQIS. Residues Arg94 and Arg100 each coordinate substrate. NAD(+)-binding positions include Asn107, Gln114, and 131–133; that span reads VGN. Substrate-binding residues include Asn133 and Arg164. His189 functions as the Proton acceptor in the catalytic mechanism.

The protein belongs to the LDH/MDH superfamily. MDH type 2 family.

It carries out the reaction (S)-malate + NAD(+) = oxaloacetate + NADH + H(+). Catalyzes the reversible oxidation of malate to oxaloacetate. This is Malate dehydrogenase from Alcanivorax borkumensis (strain ATCC 700651 / DSM 11573 / NCIMB 13689 / SK2).